The sequence spans 354 residues: Uroporphyrinogen decarboxylase (354 aa).

Substrate contacts are provided by residues 27-31 (RQAGR), aspartate 77, tyrosine 154, threonine 209, and histidine 327.

Belongs to the uroporphyrinogen decarboxylase family. Homodimer.

The protein resides in the cytoplasm. It catalyses the reaction uroporphyrinogen III + 4 H(+) = coproporphyrinogen III + 4 CO2. The protein operates within porphyrin-containing compound metabolism; protoporphyrin-IX biosynthesis; coproporphyrinogen-III from 5-aminolevulinate: step 4/4. In terms of biological role, catalyzes the decarboxylation of four acetate groups of uroporphyrinogen-III to yield coproporphyrinogen-III. The chain is Uroporphyrinogen decarboxylase from Pectobacterium carotovorum subsp. carotovorum (strain PC1).